Consider the following 230-residue polypeptide: Somatolactin (230 aa).

A signal peptide spans 1-23; that stretch reads MMTAVKQSGVWAVLLWPYLLAVS. Disulfide bonds link Cys28–Cys38, Cys88–Cys204, and Cys221–Cys229. 2 N-linked (GlcNAc...) asparagine glycosylation sites follow: Asn34 and Asn144.

It belongs to the somatotropin/prolactin family. As to expression, pituitary gland.

It localises to the secreted. The sequence is that of Somatolactin from Solea senegalensis (Senegalese sole).